Reading from the N-terminus, the 86-residue chain is MeuNaTxbeta-1 (86 aa).

Residues 1-20 (MMKIIIFLIVSSLVLIGVKT) form the signal peptide. In terms of domain architecture, LCN-type CS-alpha/beta spans 21–83 (DNGYLLDKYT…LWHYETNKCN (63 aa)). Disulfide bonds link C32–C82, C36–C57, C43–C64, and C47–C66.

Expressed by the venom gland.

It localises to the secreted. In terms of biological role, inhibits sodium channels (Nav). Also moderately inhibits human calcium-activated potassium channel KCa1.1/KCNMA1/BK (41.9% decrease at 2 uM toxin concentration). Shows moderate antimicrobial activity against both Gram-positive and -negative bacteria. This is MeuNaTxbeta-1 from Mesobuthus eupeus (Lesser Asian scorpion).